A 755-amino-acid chain; its full sequence is Xaa-Pro dipeptidyl-peptidase (755 aa).

Residues Ser-348, Asp-468, and His-498 each act as charge relay system in the active site.

The protein belongs to the peptidase S15 family. In terms of assembly, homodimer.

It is found in the cytoplasm. The catalysed reaction is Hydrolyzes Xaa-Pro-|- bonds to release unblocked, N-terminal dipeptides from substrates including Ala-Pro-|-p-nitroanilide and (sequentially) Tyr-Pro-|-Phe-Pro-|-Gly-Pro-|-Ile.. In terms of biological role, removes N-terminal dipeptides sequentially from polypeptides having unsubstituted N-termini provided that the penultimate residue is proline. The protein is Xaa-Pro dipeptidyl-peptidase of Streptococcus thermophilus (strain ATCC BAA-250 / LMG 18311).